A 604-amino-acid chain; its full sequence is Threonine--tRNA ligase (604 aa).

The catalytic stretch occupies residues 210–501; it reads DHRKIGTEME…LTEHYAGEFP (292 aa). Cysteine 302, histidine 353, and histidine 478 together coordinate Zn(2+).

It belongs to the class-II aminoacyl-tRNA synthetase family. Homodimer. Zn(2+) serves as cofactor.

The protein localises to the cytoplasm. The enzyme catalyses tRNA(Thr) + L-threonine + ATP = L-threonyl-tRNA(Thr) + AMP + diphosphate + H(+). In terms of biological role, catalyzes the attachment of threonine to tRNA(Thr) in a two-step reaction: L-threonine is first activated by ATP to form Thr-AMP and then transferred to the acceptor end of tRNA(Thr). Also edits incorrectly charged L-seryl-tRNA(Thr). The chain is Threonine--tRNA ligase from Sulfurovum sp. (strain NBC37-1).